The following is a 655-amino-acid chain: MAPSAEGASGAPTPEDLKLHQLSQKYTAEAAKRFRPEGLGQFIRLKEVGNERFRALAEDPWVDHAALNAKEPVKDGSRYKFIILGAGYGGLLYAVRLAEAGLASGPDDILMVDAAGGFGGTWWWNRYPGLHCDVESYSYMPLLEETGYIPKSKYAAGPELLEHAYRIATQWKLHDKALFRSNVKTIRWDDESRLWSLEVTEGRGPGQQSRELKLQARYVLLASGILTNPQVPKIPGLETFTGPVFHTARWNYDVTGGSPTDEALNRLEGKRVGIIGTGATAIQVVPKLAKYAKELYVFQRTPSGVWWRGQRPTDPVEWKTKIARKKGWQRERMLNLDSYLTDAAEEGQENMVADGWTEMPAFSAVIGSPRHGIVEPTPEKIAEHLGRLYKLDLPHAEQVRARTDSIVKDPKTAAKLKAWYPTWCKRPTFSDEYLQTFNLPNVHLVDTDGKGVDAANPSGLVVADKEYPLDILVLSTGYVTPSIGGGSPAVRTGVDIYGRGGKSLDDKWQTHGAATLHGVCSNGFPNLFFTPLSQSSQAANNAFTLDVGTEHIVQVIKTAEDRVDGDALVEVTSEAEEAWSFEIMKHAGWFASVTGCTPGYITSEGEALRKSEDPMEMAKRARSGNLSQGMASYMKLLQEYRADGSLKGFDISSRA.

Glycine 89, aspartate 113, alanine 114, threonine 121, tryptophan 124, cysteine 132, aspartate 133, tyrosine 139, and valine 183 together coordinate FAD. Threonine 277, threonine 280, threonine 301, lysine 425, and valine 452 together coordinate NADPH. A disulfide bridge connects residues cysteine 424 and cysteine 596. FAD-binding residues include threonine 492 and asparagine 541. Tyrosine 600 provides a ligand contact to NADPH.

This sequence belongs to the FAD-binding monooxygenase family. Requires FAD as cofactor.

Its function is as follows. Polycyclic ketone monooxygenase (PockeMO) that displays excellent enantioselectivity, acts on various ketones, and is particularly active on polycyclic molecules. Breaks C-C bonds through the insertion of a single oxygen atom adjacent to a carbonyl moiety, yielding esters or lactones from ketones. PockeMO is able to convert linear ketones (including cyclohexane and to a lesser extend 4-octanone), cyclic ketones (including cyclohexanone and cyclooctanone), bicyclic ketones and polycyclic ketones (steroids). Performs oxidation of the keto functionalities at both the A and D rings of steroids. Particularly, oxidizes the A ring of stanolone or pregnenolone. Selectively oxidizes the D ring of androstenedione or androstadienedione, steroids with keto groups in both the A and D rings, to yield the pharmaceutically relevant testo(lo)lactone. This Thermothelomyces thermophilus (strain ATCC 42464 / BCRC 31852 / DSM 1799) (Sporotrichum thermophile) protein is Polycyclic ketone monooxygenase.